A 78-amino-acid chain; its full sequence is Large ribosomal subunit protein bL28 (78 aa).

The disordered stretch occupies residues 1 to 28 (MSAYCQVTGRKPGFGKQVSHSHRHTSRR).

Belongs to the bacterial ribosomal protein bL28 family.

The protein is Large ribosomal subunit protein bL28 of Corynebacterium urealyticum (strain ATCC 43042 / DSM 7109).